The sequence spans 301 residues: tRNA pseudouridine synthase B (301 aa).

Catalysis depends on aspartate 47, which acts as the Nucleophile.

The protein belongs to the pseudouridine synthase TruB family. Type 1 subfamily.

It carries out the reaction uridine(55) in tRNA = pseudouridine(55) in tRNA. Responsible for synthesis of pseudouridine from uracil-55 in the psi GC loop of transfer RNAs. The sequence is that of tRNA pseudouridine synthase B from Cereibacter sphaeroides (strain ATCC 17023 / DSM 158 / JCM 6121 / CCUG 31486 / LMG 2827 / NBRC 12203 / NCIMB 8253 / ATH 2.4.1.) (Rhodobacter sphaeroides).